The following is a 506-amino-acid chain: 2,3-bisphosphoglycerate-independent phosphoglycerate mutase (506 aa).

Mn(2+)-binding residues include Asp13 and Ser63. Catalysis depends on Ser63, which acts as the Phosphoserine intermediate. Residues His124, 153-154 (RD), Arg183, Arg189, 254-257 (RADR), and Lys330 each bind substrate. Mn(2+)-binding residues include Asp396, His400, Asp437, His438, and His456.

It belongs to the BPG-independent phosphoglycerate mutase family. In terms of assembly, monomer. The cofactor is Mn(2+).

It carries out the reaction (2R)-2-phosphoglycerate = (2R)-3-phosphoglycerate. It participates in carbohydrate degradation; glycolysis; pyruvate from D-glyceraldehyde 3-phosphate: step 3/5. Its function is as follows. Catalyzes the interconversion of 2-phosphoglycerate and 3-phosphoglycerate. The protein is 2,3-bisphosphoglycerate-independent phosphoglycerate mutase of Cereibacter sphaeroides (strain ATCC 17029 / ATH 2.4.9) (Rhodobacter sphaeroides).